A 467-amino-acid chain; its full sequence is Asparagine--tRNA ligase (467 aa).

The protein belongs to the class-II aminoacyl-tRNA synthetase family. As to quaternary structure, homodimer.

The protein resides in the cytoplasm. The enzyme catalyses tRNA(Asn) + L-asparagine + ATP = L-asparaginyl-tRNA(Asn) + AMP + diphosphate + H(+). This Haemophilus influenzae (strain PittEE) protein is Asparagine--tRNA ligase.